A 119-amino-acid chain; its full sequence is Circadian clock oscillator protein KaiB (119 aa).

Belongs to the KaiB family. As to quaternary structure, may undergo a major conformational rearrangment; in the free state forms homooligomers. When bound to KaiC switches to a monomeric thioredoxin-fold (KaiB(fs)). The active oscillator complex is probably KaiC(6):KaiB(6).

In terms of biological role, component of the KaiBC clock protein complex, which constitutes the main circadian regulator in cyanobacteria; it may modify the ATPase activity of KaiC. Functionally, may be a metamorphic protein which reversibly switches between an inactive tetrameric fold and a rare, thioredoxin-like monomeric fold (KaiB(fs)). KaiB(fs) binds phospho-KaiC, and perhaps clock output effectors. The chain is Circadian clock oscillator protein KaiB from Prochlorococcus marinus (strain MIT 9303).